The primary structure comprises 212 residues: Dephospho-CoA kinase (212 aa).

Residues 8 to 212 enclose the DPCK domain; the sequence is LVGVTGGLGS…QLLQQAMLRR (205 aa). 16–21 lines the ATP pocket; the sequence is GSGKSM.

This sequence belongs to the CoaE family.

Its subcellular location is the cytoplasm. The enzyme catalyses 3'-dephospho-CoA + ATP = ADP + CoA + H(+). It functions in the pathway cofactor biosynthesis; coenzyme A biosynthesis; CoA from (R)-pantothenate: step 5/5. Functionally, catalyzes the phosphorylation of the 3'-hydroxyl group of dephosphocoenzyme A to form coenzyme A. The protein is Dephospho-CoA kinase of Chlorobium chlorochromatii (strain CaD3).